A 376-amino-acid chain; its full sequence is MNAQHSSADLRDVIRNAKRIVVKIGSSSLTGENFEVSPGRIDRIVEALEDRMHRGSDVIVVSSGAVAAGMAPLGLTSRPKDLATKQAAASVGQVHLANAWGNSFARYNRTIGQVLLTASDAGQRDRARNAQRTIDRLRLLHAVPIINENDTVATSEMHFGDNDRLAAIVSHLVSADALVLLSDVDGLYDKNPADPSARFVSEVRDGNDLKGVIAGDGGAVGTGGMASKVSAARLASRSGVPVLLTSADYVAEALGDAEVGTVFYPKDDRLSAWKFWALYAADTGGALRIDAGAVAAVTAGGNSLLAVGITEVIGDFHAGEIVEILGPEGEIIGRGEVAYDSAVLITMLGKQTAQLPEGLQRPVVHADYLSDYASRA.

Lysine 23 contacts ATP. 3 residues coordinate substrate: serine 63, aspartate 150, and asparagine 162. ATP-binding positions include 182–183 (SD) and 222–228 (TGGMASK). Residues 284–358 (GGALRIDAGA…GKQTAQLPEG (75 aa)) enclose the PUA domain.

This sequence belongs to the glutamate 5-kinase family.

It is found in the cytoplasm. The catalysed reaction is L-glutamate + ATP = L-glutamyl 5-phosphate + ADP. Its pathway is amino-acid biosynthesis; L-proline biosynthesis; L-glutamate 5-semialdehyde from L-glutamate: step 1/2. Catalyzes the transfer of a phosphate group to glutamate to form L-glutamate 5-phosphate. The chain is Glutamate 5-kinase from Corynebacterium diphtheriae (strain ATCC 700971 / NCTC 13129 / Biotype gravis).